Consider the following 2298-residue polypeptide: Protein Ycf2 (2298 aa).

G1637–S1644 is a binding site for ATP.

Belongs to the Ycf2 family.

Its subcellular location is the plastid. It localises to the chloroplast stroma. In terms of biological role, probable ATPase of unknown function. Its presence in a non-photosynthetic plant (Epifagus virginiana) and experiments in tobacco indicate that it has an essential function which is probably not related to photosynthesis. The protein is Protein Ycf2 of Lotus japonicus (Lotus corniculatus var. japonicus).